Here is a 198-residue protein sequence, read N- to C-terminus: Nucleoid occlusion factor SlmA (198 aa).

The 61-residue stretch at 10 to 70 (NRREEILQSL…SLIEFIEDSL (61 aa)) folds into the HTH tetR-type domain. A DNA-binding region (H-T-H motif) is located at residues 33-52 (TTAKLAASVGVSEAALYRHF). Positions 117–145 (EQDKLQGRINQLFERIEAQLRQVLREKKM) form a coiled coil.

Belongs to the nucleoid occlusion factor SlmA family. In terms of assembly, homodimer. Interacts with FtsZ.

It is found in the cytoplasm. It localises to the nucleoid. Its function is as follows. Required for nucleoid occlusion (NO) phenomenon, which prevents Z-ring formation and cell division over the nucleoid. Acts as a DNA-associated cell division inhibitor that binds simultaneously chromosomal DNA and FtsZ, and disrupts the assembly of FtsZ polymers. SlmA-DNA-binding sequences (SBS) are dispersed on non-Ter regions of the chromosome, preventing FtsZ polymerization at these regions. The polypeptide is Nucleoid occlusion factor SlmA (Enterobacter sp. (strain 638)).